A 207-amino-acid chain; its full sequence is Suppressor of IKBKE 1 (207 aa).

Coiled coils occupy residues 70–102 (HILL…DALE) and 162–193 (QFCK…SLQA).

Belongs to the SIKE family. In terms of assembly, interacts with IKBKE and TBK1 via its coiled coil region. Interaction with TBK1 is disrupted upon viral infection or TLR3 stimulation. Interacts with CDC42BPB. Interacts with SIKE1 which mediates association with the STRIPAK core complex composed of PP2A catalytic and scaffolding subunits, the striatins (PP2A regulatory subunits), the striatin-associated proteins MOB4, STRIP1 and STRIP2, PDCD10 and members of the STE20 kinases, such as STK24 and STK26. Widely expressed. Expressed in brain, heart, skeletal muscle, colon, thymus, spleen, kidney, liver, small intestine, placenta, lung and leukocytes. Present in all cell lines tested (at protein level).

The protein resides in the cytoplasm. Functionally, physiological suppressor of IKK-epsilon and TBK1 that plays an inhibitory role in virus- and TLR3-triggered IRF3. Inhibits TLR3-mediated activation of interferon-stimulated response elements (ISRE) and the IFN-beta promoter. May act by disrupting the interactions of IKBKE or TBK1 with TICAM1/TRIF, IRF3 and RIGI. Does not inhibit NF-kappa-B activation pathways. Associates with the striatin-interacting phosphatase and kinase (STRIPAK) core complex, forming the extended (SIKE1:SLMAP)STRIPAK complex. The (SIKE1:SLMAP)STRIPAK complex dephosphorylates STK3 leading to the inhibition of Hippo signaling and the control of cell growth. This chain is Suppressor of IKBKE 1, found in Homo sapiens (Human).